A 308-amino-acid polypeptide reads, in one-letter code: MNTAPSPSDRPLSHALSHTPVLAAEVVAALAPAPGRVIVDGTLGGAGHTRLLLEAGASVIGIDQDPYALNRAREAQLPQLTVLEGNYRDMRELLAGIGVTQVDGVLLDIGVSSFQLDDAARGFSYHTDAPLDMRMAQSGESAAEVVNGYPEEELAAIIYEYGEERHSRRIARAIVQARTQAPIQSTVQLAEIIKRAYPGFSKGIHPARRTFQALRIHVNDELGALRDGLRAAEALLTPGGRLAVIAFHSLEDRIVKRFLRASPTLKSLTKRPVEASEEERGRNPRARSAKLRAAEKVAAPEGLPEVEV.

S-adenosyl-L-methionine is bound by residues 46 to 48, aspartate 63, tyrosine 87, aspartate 108, and glutamine 115; that span reads AGH. The segment at 269–308 is disordered; the sequence is TKRPVEASEEERGRNPRARSAKLRAAEKVAAPEGLPEVEV. Residues 271-282 are compositionally biased toward basic and acidic residues; it reads RPVEASEEERGR.

The protein belongs to the methyltransferase superfamily. RsmH family.

The protein resides in the cytoplasm. The enzyme catalyses cytidine(1402) in 16S rRNA + S-adenosyl-L-methionine = N(4)-methylcytidine(1402) in 16S rRNA + S-adenosyl-L-homocysteine + H(+). Functionally, specifically methylates the N4 position of cytidine in position 1402 (C1402) of 16S rRNA. In Deinococcus geothermalis (strain DSM 11300 / CIP 105573 / AG-3a), this protein is Ribosomal RNA small subunit methyltransferase H.